We begin with the raw amino-acid sequence, 235 residues long: Purine nucleoside phosphorylase DeoD-type (235 aa).

His4 provides a ligand contact to a purine D-ribonucleoside. Phosphate contacts are provided by residues Gly20, Arg24, Arg43, and 87–90 (RVGT). Residues Glu162, 179–181 (EME), and 203–204 (SD) each bind a purine D-ribonucleoside. Residue Asp204 is the Proton donor of the active site.

This sequence belongs to the PNP/UDP phosphorylase family. As to quaternary structure, homohexamer; trimer of homodimers.

It catalyses the reaction a purine D-ribonucleoside + phosphate = a purine nucleobase + alpha-D-ribose 1-phosphate. The catalysed reaction is a purine 2'-deoxy-D-ribonucleoside + phosphate = a purine nucleobase + 2-deoxy-alpha-D-ribose 1-phosphate. Functionally, catalyzes the reversible phosphorolytic breakdown of the N-glycosidic bond in the beta-(deoxy)ribonucleoside molecules, with the formation of the corresponding free purine bases and pentose-1-phosphate. The chain is Purine nucleoside phosphorylase DeoD-type from Bacillus cereus (strain ZK / E33L).